A 96-amino-acid chain; its full sequence is Co-chaperonin GroES (96 aa).

The protein belongs to the GroES chaperonin family. In terms of assembly, heptamer of 7 subunits arranged in a ring. Interacts with the chaperonin GroEL.

It is found in the cytoplasm. Together with the chaperonin GroEL, plays an essential role in assisting protein folding. The GroEL-GroES system forms a nano-cage that allows encapsulation of the non-native substrate proteins and provides a physical environment optimized to promote and accelerate protein folding. GroES binds to the apical surface of the GroEL ring, thereby capping the opening of the GroEL channel. This is Co-chaperonin GroES from Polynucleobacter asymbioticus (strain DSM 18221 / CIP 109841 / QLW-P1DMWA-1) (Polynucleobacter necessarius subsp. asymbioticus).